We begin with the raw amino-acid sequence, 130 residues long: Neelaredoxin (130 aa).

Fe cation contacts are provided by Glu15, His17, His45, His51, Cys115, and His118.

Belongs to the desulfoferrodoxin family. As to quaternary structure, monomer. Requires Fe cation as cofactor.

It carries out the reaction 2 superoxide + 2 H(+) = H2O2 + O2. In terms of biological role, non-heme iron protein. The polypeptide is Neelaredoxin (nlr) (Megalodesulfovibrio gigas (Desulfovibrio gigas)).